A 530-amino-acid polypeptide reads, in one-letter code: Autoinducer-2 kinase (530 aa).

It belongs to the FGGY kinase family.

The protein resides in the cytoplasm. The enzyme catalyses (S)-4,5-dihydroxypentane-2,3-dione + ATP = (2S)-2-hydroxy-3,4-dioxopentyl phosphate + ADP + H(+). In terms of biological role, catalyzes the phosphorylation of autoinducer-2 (AI-2) to phospho-AI-2, which subsequently inactivates the transcriptional regulator LsrR and leads to the transcription of the lsr operon. Phosphorylates the ring-open form of (S)-4,5-dihydroxypentane-2,3-dione (DPD), which is the precursor to all AI-2 signaling molecules, at the C5 position. This Yersinia pseudotuberculosis serotype O:3 (strain YPIII) protein is Autoinducer-2 kinase.